The chain runs to 271 residues: Formamidopyrimidine-DNA glycosylase (271 aa).

Pro2 functions as the Schiff-base intermediate with DNA in the catalytic mechanism. Residue Glu3 is the Proton donor of the active site. Residue Lys58 is the Proton donor; for beta-elimination activity of the active site. Residues His92, Arg111, and Lys152 each coordinate DNA. The segment at 237–271 adopts an FPG-type zinc-finger fold; it reads YVYGKVQKPCKICNNTITLIRQNGRSTYFCNACQN. Arg261 (proton donor; for delta-elimination activity) is an active-site residue.

It belongs to the FPG family. As to quaternary structure, monomer. It depends on Zn(2+) as a cofactor.

It catalyses the reaction Hydrolysis of DNA containing ring-opened 7-methylguanine residues, releasing 2,6-diamino-4-hydroxy-5-(N-methyl)formamidopyrimidine.. It carries out the reaction 2'-deoxyribonucleotide-(2'-deoxyribose 5'-phosphate)-2'-deoxyribonucleotide-DNA = a 3'-end 2'-deoxyribonucleotide-(2,3-dehydro-2,3-deoxyribose 5'-phosphate)-DNA + a 5'-end 5'-phospho-2'-deoxyribonucleoside-DNA + H(+). Its function is as follows. Involved in base excision repair of DNA damaged by oxidation or by mutagenic agents. Acts as a DNA glycosylase that recognizes and removes damaged bases. Has a preference for oxidized purines, such as 7,8-dihydro-8-oxoguanine (8-oxoG). Has AP (apurinic/apyrimidinic) lyase activity and introduces nicks in the DNA strand. Cleaves the DNA backbone by beta-delta elimination to generate a single-strand break at the site of the removed base with both 3'- and 5'-phosphates. The chain is Formamidopyrimidine-DNA glycosylase from Wolbachia sp. subsp. Brugia malayi (strain TRS).